A 132-amino-acid polypeptide reads, in one-letter code: Small ribosomal subunit protein uS8 (132 aa).

It belongs to the universal ribosomal protein uS8 family. As to quaternary structure, part of the 30S ribosomal subunit. Contacts proteins S5 and S12.

One of the primary rRNA binding proteins, it binds directly to 16S rRNA central domain where it helps coordinate assembly of the platform of the 30S subunit. This is Small ribosomal subunit protein uS8 from Baumannia cicadellinicola subsp. Homalodisca coagulata.